Consider the following 207-residue polypeptide: Glycerol-3-phosphate acyltransferase (207 aa).

6 helical membrane-spanning segments follow: residues 8-28, 64-84, 92-112, 122-142, 154-174, and 176-196; these read NIVF…LILA, LGIA…LVGI, TLWA…YLGL, LGVY…VWIV, SLLG…GLGI, and SNIP…PNIV.

It belongs to the PlsY family. Probably interacts with PlsX.

It localises to the cell inner membrane. It catalyses the reaction an acyl phosphate + sn-glycerol 3-phosphate = a 1-acyl-sn-glycero-3-phosphate + phosphate. It participates in lipid metabolism; phospholipid metabolism. Its function is as follows. Catalyzes the transfer of an acyl group from acyl-phosphate (acyl-PO(4)) to glycerol-3-phosphate (G3P) to form lysophosphatidic acid (LPA). This enzyme utilizes acyl-phosphate as fatty acyl donor, but not acyl-CoA or acyl-ACP. In Aliarcobacter butzleri (strain RM4018) (Arcobacter butzleri), this protein is Glycerol-3-phosphate acyltransferase.